Reading from the N-terminus, the 482-residue chain is Aspartyl/glutamyl-tRNA(Asn/Gln) amidotransferase subunit B (482 aa).

The protein belongs to the GatB/GatE family. GatB subfamily. As to quaternary structure, heterotrimer of A, B and C subunits.

It catalyses the reaction L-glutamyl-tRNA(Gln) + L-glutamine + ATP + H2O = L-glutaminyl-tRNA(Gln) + L-glutamate + ADP + phosphate + H(+). It carries out the reaction L-aspartyl-tRNA(Asn) + L-glutamine + ATP + H2O = L-asparaginyl-tRNA(Asn) + L-glutamate + ADP + phosphate + 2 H(+). Functionally, allows the formation of correctly charged Asn-tRNA(Asn) or Gln-tRNA(Gln) through the transamidation of misacylated Asp-tRNA(Asn) or Glu-tRNA(Gln) in organisms which lack either or both of asparaginyl-tRNA or glutaminyl-tRNA synthetases. The reaction takes place in the presence of glutamine and ATP through an activated phospho-Asp-tRNA(Asn) or phospho-Glu-tRNA(Gln). The protein is Aspartyl/glutamyl-tRNA(Asn/Gln) amidotransferase subunit B of Azotobacter vinelandii (strain DJ / ATCC BAA-1303).